The chain runs to 261 residues: tRNA pseudouridine synthase A (261 aa).

Aspartate 51 acts as the Nucleophile in catalysis. Substrate is bound at residue tyrosine 109.

This sequence belongs to the tRNA pseudouridine synthase TruA family. Homodimer.

It catalyses the reaction uridine(38/39/40) in tRNA = pseudouridine(38/39/40) in tRNA. Formation of pseudouridine at positions 38, 39 and 40 in the anticodon stem and loop of transfer RNAs. This Shewanella woodyi (strain ATCC 51908 / MS32) protein is tRNA pseudouridine synthase A.